A 473-amino-acid polypeptide reads, in one-letter code: Putative sulfoquinovose importer (473 aa).

Transmembrane regions (helical) follow at residues Ala-18–Leu-38, Leu-45–Phe-65, Pro-88–Thr-108, Phe-110–Tyr-130, Gly-160–Phe-180, Gly-187–Phe-207, Leu-239–Ile-259, Trp-276–Val-296, Ile-317–Phe-337, Ile-380–Pro-400, and Leu-415–Tyr-435.

The protein belongs to the sodium:galactoside symporter (TC 2.A.2) family.

It localises to the cell inner membrane. Could be involved in sulfoquinovose import. The sequence is that of Putative sulfoquinovose importer (yihO) from Salmonella typhimurium (strain LT2 / SGSC1412 / ATCC 700720).